Consider the following 384-residue polypeptide: Protein cutoff (384 aa).

Belongs to the DXO/Dom3Z family. In terms of assembly, component of the Rhino-Deadlock-Cutoff (RDC) complex, composed of rhi/rhino, del/deadlock and cuff/cutoff. Interacts with rhi/rhino; this interaction is indirect and is mediated by del/deadlock. Interacts with del/deadlock (via C-terminal); this interaction is direct. Interacts with Rat1.

Its subcellular location is the cytoplasm. It is found in the nucleus. The protein localises to the chromosome. Involved in the piRNA pathway in germline tissues. Part of the Rhino-Deadlock-Cutoff (RDC) complex that stimulates piRNA biogenesis from chromatin regions corresponding to dual-strand, but not single-stranded, piRNA clusters. Promotes transcription of long piRNA precursors by preventing termination at canonical poly(A) sites. As part of the RDC complex, is recruited to chromatin enriched in histone modification H3K9me3 and might contribute to complex interaction by binding nascent transcript nucleic acid chains. Associates with chromatin upon exposure to homologous piRNA. Suppresses cleavage at canonical poly(A) sites by blocking recruitment of the cleavage and polyadenylation specificity factor (CPSF) complex and prevents transcriptional termination by RNA polymerase II, facilitating transcriptional read-through. As part of the RDC complex, involved in suppression of splicing. Catalytically inactive, lacking 5'-3' exonuclease and pyrophosphohydrolase activities. Stabilizes uncapped piRNA precursors in the nucleus, probably by sequestering or blocking the exonuclease activity of Rat1. May also be involved in siRNA biogenesis from dual-strand piRNA clusters. This is Protein cutoff (cuff) from Drosophila melanogaster (Fruit fly).